A 166-amino-acid polypeptide reads, in one-letter code: Putative tRNA (cytidine(34)-2'-O)-methyltransferase (166 aa).

Leu-83, Gly-109, Ile-130, and Ser-138 together coordinate S-adenosyl-L-methionine.

Belongs to the class IV-like SAM-binding methyltransferase superfamily. RNA methyltransferase TrmH family. TrmL subfamily.

It localises to the cytoplasm. It catalyses the reaction cytidine(34) in tRNA + S-adenosyl-L-methionine = 2'-O-methylcytidine(34) in tRNA + S-adenosyl-L-homocysteine + H(+). The catalysed reaction is 5-carboxymethylaminomethyluridine(34) in tRNA(Leu) + S-adenosyl-L-methionine = 5-carboxymethylaminomethyl-2'-O-methyluridine(34) in tRNA(Leu) + S-adenosyl-L-homocysteine + H(+). Could methylate the ribose at the nucleotide 34 wobble position in tRNA. This is Putative tRNA (cytidine(34)-2'-O)-methyltransferase from Mycoplasma genitalium (strain ATCC 33530 / DSM 19775 / NCTC 10195 / G37) (Mycoplasmoides genitalium).